The sequence spans 474 residues: Trehalose-6-phosphate synthase (474 aa).

R10 contributes to the D-glucose 6-phosphate binding site. 22–23 (GG) contributes to the UDP-alpha-D-glucose binding site. D-glucose 6-phosphate-binding residues include Y77 and D131. The UDP-alpha-D-glucose site is built by R263 and K268. R301 provides a ligand contact to D-glucose 6-phosphate. UDP-alpha-D-glucose contacts are provided by residues F340 and 366–370 (LVAKE).

Belongs to the glycosyltransferase 20 family. As to quaternary structure, homotetramer.

The enzyme catalyses D-glucose 6-phosphate + UDP-alpha-D-glucose = alpha,alpha-trehalose 6-phosphate + UDP + H(+). The protein operates within glycan biosynthesis; trehalose biosynthesis. Its function is as follows. Probably involved in the osmoprotection via the biosynthesis of trehalose. Catalyzes the transfer of glucose from UDP-alpha-D-glucose (UDP-Glc) to D-glucose 6-phosphate (Glc-6-P) to form trehalose-6-phosphate. Acts with retention of the anomeric configuration of the UDP-sugar donor. This Pseudomonas savastanoi (Pseudomonas syringae pv. savastanoi) protein is Trehalose-6-phosphate synthase.